We begin with the raw amino-acid sequence, 330 residues long: DNA primase small subunit PriS (330 aa).

Catalysis depends on residues Asp-101 and Asp-103. Zn(2+) is bound by residues Cys-116, Cys-119, Cys-128, and Asp-131. Residue Asp-235 is part of the active site.

The protein belongs to the eukaryotic-type primase small subunit family. As to quaternary structure, heterodimer of a small subunit (PriS) and a large subunit (PriL). The cofactor is Mg(2+). Requires Mn(2+) as cofactor.

Functionally, catalytic subunit of DNA primase, an RNA polymerase that catalyzes the synthesis of short RNA molecules used as primers for DNA polymerase during DNA replication. The small subunit contains the primase catalytic core and has DNA synthesis activity on its own. Binding to the large subunit stabilizes and modulates the activity, increasing the rate of DNA synthesis while decreasing the length of the DNA fragments, and conferring RNA synthesis capability. The DNA polymerase activity may enable DNA primase to also catalyze primer extension after primer synthesis. May also play a role in DNA repair. This Saccharolobus islandicus (strain M.16.27) (Sulfolobus islandicus) protein is DNA primase small subunit PriS.